Here is a 342-residue protein sequence, read N- to C-terminus: S-adenosylmethionine:tRNA ribosyltransferase-isomerase (342 aa).

Belongs to the QueA family. As to quaternary structure, monomer.

The protein resides in the cytoplasm. The enzyme catalyses 7-aminomethyl-7-carbaguanosine(34) in tRNA + S-adenosyl-L-methionine = epoxyqueuosine(34) in tRNA + adenine + L-methionine + 2 H(+). It functions in the pathway tRNA modification; tRNA-queuosine biosynthesis. In terms of biological role, transfers and isomerizes the ribose moiety from AdoMet to the 7-aminomethyl group of 7-deazaguanine (preQ1-tRNA) to give epoxyqueuosine (oQ-tRNA). The protein is S-adenosylmethionine:tRNA ribosyltransferase-isomerase of Streptococcus pneumoniae serotype 19F (strain G54).